The primary structure comprises 215 residues: Octanoyltransferase (215 aa).

The 174-residue stretch at 42–215 (QNTPDEIWLL…AEKLKARLKQ (174 aa)) folds into the BPL/LPL catalytic domain. Substrate contacts are provided by residues 81-88 (RGGQITYH), 148-150 (ALG), and 161-163 (GLA). C179 (acyl-thioester intermediate) is an active-site residue.

The protein belongs to the LipB family.

The protein localises to the cytoplasm. The catalysed reaction is octanoyl-[ACP] + L-lysyl-[protein] = N(6)-octanoyl-L-lysyl-[protein] + holo-[ACP] + H(+). Its pathway is protein modification; protein lipoylation via endogenous pathway; protein N(6)-(lipoyl)lysine from octanoyl-[acyl-carrier-protein]: step 1/2. Its function is as follows. Catalyzes the transfer of endogenously produced octanoic acid from octanoyl-acyl-carrier-protein onto the lipoyl domains of lipoate-dependent enzymes. Lipoyl-ACP can also act as a substrate although octanoyl-ACP is likely to be the physiological substrate. This is Octanoyltransferase from Nitrosospira multiformis (strain ATCC 25196 / NCIMB 11849 / C 71).